The sequence spans 238 residues: Uroporphyrinogen-III C-methyltransferase (238 aa).

Residues P11, 87–89, 117–118, and M170 each bind S-adenosyl-L-homocysteine; these read GGD and TS.

This sequence belongs to the precorrin methyltransferase family. As to quaternary structure, monomer.

It carries out the reaction uroporphyrinogen III + 2 S-adenosyl-L-methionine = precorrin-2 + 2 S-adenosyl-L-homocysteine + H(+). It participates in cofactor biosynthesis; adenosylcobalamin biosynthesis; precorrin-2 from uroporphyrinogen III: step 1/1. The protein operates within porphyrin-containing compound metabolism; siroheme biosynthesis; precorrin-2 from uroporphyrinogen III: step 1/1. Its activity is regulated as follows. SUMT exhibits a substrate inhibition phenomenon at uroporphyrinogen III concentrations above 0.5 uM; this property might play a regulatory role in cobalamin biosynthesis. In terms of biological role, catalyzes the two successive C-2 and C-7 methylation reactions involved in the conversion of uroporphyrinogen III to precorrin-2 via the intermediate formation of precorrin-1. It is a step in the biosynthesis of both cobalamin (vitamin B12) and siroheme. This chain is Uroporphyrinogen-III C-methyltransferase, found in Priestia megaterium (Bacillus megaterium).